We begin with the raw amino-acid sequence, 404 residues long: MQIGQRLGTPLSPSATRVMLLGAGELGKEVIIALQRLGVEVIAVDRYPNAPGHQVAHRAHVIDMTDPDALRALVDAERPHLVVPEIEAIATDALAAIEAAGVCEVIPTARATQLTMNREGIRRLAAEELGLPTSPYAFAQSFDEFAAAVARIGFPCVVKPVMSSSGKGQSVVRSEADIEPAWRYAMAGGRVNHGRVIVEGFIRFDYEITQLTVRAIDPASGQTRTSFCAPIGHLQVAGDYVESWQPQPMSAKALERSRDIAHRVTSALGGRGIFGVELFVRGDDVWFSEVSPRPHDTGLVTLASQRQSEFELHARAILGLPVEPALATPAASAVIYGGLDEAGIAFEGVRDALAVPGADLRLFGKPESFAKRRMGVALATGANVDEARERAKRAAAAVRPVSAR.

Residues 25 to 26 (EL) and Glu-85 contribute to the N(1)-(5-phospho-beta-D-ribosyl)glycinamide site. Residues Arg-118, Lys-159, 164-169 (SSGKGQ), 199-202 (EGFI), and Glu-207 each bind ATP. Positions 123 to 318 (RLAAEELGLP…EFELHARAIL (196 aa)) constitute an ATP-grasp domain. 2 residues coordinate Mg(2+): Glu-277 and Glu-289. N(1)-(5-phospho-beta-D-ribosyl)glycinamide is bound by residues Asp-296, Lys-365, and 372 to 373 (RR).

Belongs to the PurK/PurT family. Homodimer.

The catalysed reaction is N(1)-(5-phospho-beta-D-ribosyl)glycinamide + formate + ATP = N(2)-formyl-N(1)-(5-phospho-beta-D-ribosyl)glycinamide + ADP + phosphate + H(+). Its pathway is purine metabolism; IMP biosynthesis via de novo pathway; N(2)-formyl-N(1)-(5-phospho-D-ribosyl)glycinamide from N(1)-(5-phospho-D-ribosyl)glycinamide (formate route): step 1/1. Its function is as follows. Involved in the de novo purine biosynthesis. Catalyzes the transfer of formate to 5-phospho-ribosyl-glycinamide (GAR), producing 5-phospho-ribosyl-N-formylglycinamide (FGAR). Formate is provided by PurU via hydrolysis of 10-formyl-tetrahydrofolate. This chain is Formate-dependent phosphoribosylglycinamide formyltransferase, found in Burkholderia pseudomallei (strain 1106a).